A 316-amino-acid polypeptide reads, in one-letter code: HPr kinase/phosphorylase (316 aa).

Catalysis depends on residues His-146 and Lys-167. Residue 161 to 168 (GESGLGKS) participates in ATP binding. Ser-168 contributes to the Mg(2+) binding site. The Proton acceptor; for phosphorylation activity. Proton donor; for dephosphorylation activity role is filled by Asp-185. The tract at residues 209 to 218 (LEVRGIGLLD) is important for the catalytic mechanism of both phosphorylation and dephosphorylation. Glu-210 provides a ligand contact to Mg(2+). Arg-252 is an active-site residue. The important for the catalytic mechanism of dephosphorylation stretch occupies residues 273–278 (QVEAGR).

The protein belongs to the HPrK/P family. Homohexamer. Requires Mg(2+) as cofactor.

The enzyme catalyses [HPr protein]-L-serine + ATP = [HPr protein]-O-phospho-L-serine + ADP + H(+). It catalyses the reaction [HPr protein]-O-phospho-L-serine + phosphate + H(+) = [HPr protein]-L-serine + diphosphate. Catalyzes the ATP- as well as the pyrophosphate-dependent phosphorylation of a specific serine residue in HPr, a phosphocarrier protein of the phosphoenolpyruvate-dependent sugar phosphotransferase system (PTS). HprK/P also catalyzes the pyrophosphate-producing, inorganic phosphate-dependent dephosphorylation (phosphorolysis) of seryl-phosphorylated HPr (P-Ser-HPr). This is HPr kinase/phosphorylase from Polaromonas sp. (strain JS666 / ATCC BAA-500).